Here is a 1002-residue protein sequence, read N- to C-terminus: Solute carrier family 12 member 3 (1002 aa).

The Cytoplasmic portion of the chain corresponds to M1–G135. At S41 the chain carries Phosphoserine. The residue at position 44 (T44) is a Phosphothreonine. At S47 the chain carries Phosphoserine. 3 positions are modified to phosphothreonine: T48, T53, and T58. Phosphoserine occurs at positions 71 and 89. Phosphothreonine is present on T122. The residue at position 124 (S124) is a Phosphoserine. Residues W136 to G165 form a discontinuously helical membrane-spanning segment. 2 residues coordinate Na(+): L146 and W149. The helical transmembrane segment at I166–I187 threads the bilayer. At S188–G218 the chain is on the cytoplasmic side. Residues L219–R241 traverse the membrane as a helical segment. The Extracellular segment spans residues D242–D253. The next 2 membrane-spanning stretches (helical) occupy residues P254–E278 and W279–G301. The Extracellular segment spans residues T302–G336. The chain crosses the membrane as a discontinuously helical span at residues S337 to I358. Chloride-binding residues include G351, I352, and L353. Over S359–I369 the chain is Cytoplasmic. Residues P370–I391 form a helical membrane-spanning segment. The Extracellular portion of the chain corresponds to G392–F451. N404 carries an N-linked (GlcNAc...) asparagine glycan. Cysteines 414 and 419 form a disulfide. N424 carries N-linked (GlcNAc...) asparagine glycosylation. C428 and C434 are oxidised to a cystine. Residues A452–A475 traverse the membrane as a helical segment. Residues A462, S465, and S466 each coordinate Na(+). The Cytoplasmic segment spans residues K476 to R505. A helical membrane pass occupies residues G506–I520. At A521–T525 the chain is on the extracellular side. A helical membrane pass occupies residues I526 to N542. Residue Y538 coordinates chloride. The Cytoplasmic portion of the chain corresponds to F543–K565. Helical transmembrane passes span W566–W585 and A586–L597. Topologically, residues L598–Q1002 are cytoplasmic. A scissor helix region spans residues S613–G628. ATP-binding residues include L646, R653, V675, G739, L778, and N779.

This sequence belongs to the SLC12A transporter family. Homodimer; adopts a domain-swap conformation at the scissor helices connecting the transmembrane domain and C-terminal domain. Interacts with KLHL3. Interacts with IL18R1; this interaction is increased by IL18 treatment. Ubiquitinated; ubiquitination is essential for regulation of endocytosis. Post-translationally, phosphorylated at Thr-53, Thr-58 and Ser-71 by OXSR1/OSR1 and STK39/SPAK downstream of WNK4, promoting its activity. Phosphorylated in response to IL18. Expressed predominantly in kidney, including in distal tubules (at protein level). Detected at low levels in heart, lung and liver. Not detected in normal aorta, but abundantly expressed in fatty streaks and advanced atherosclerotic lesions. In atherosclerotic lesions, expressed in macrophages, smooth muscle cells and endothelial cells (at protein level).

It localises to the cell membrane. It is found in the apical cell membrane. It carries out the reaction chloride(out) + Na(+)(out) = chloride(in) + Na(+)(in). With respect to regulation, phosphorylation by OXSR1/OSR1 and STK39/SPAK in kidney distal convoluted tubules promotes its activity. Also activated by OXSR1/OSR1 and STK39/SPAK downstream of WNK3. Inhibited by thiazide-type diuretic metolazone. Thiazide drugs, such as polythiazide, specifically inhibit SLC12A3/NCC transporter activity by competing with chloride for binding. Its function is as follows. Electroneutral sodium and chloride ion cotransporter, which acts as a key mediator of sodium and chloride reabsorption in kidney distal convoluted tubules. Also acts as a receptor for the pro-inflammatory cytokine IL18, thereby contributing to IL18-induced cytokine production, including IFNG, IL6, IL18 and CCL2. May act either independently of IL18R1, or in a complex with IL18R1. The polypeptide is Solute carrier family 12 member 3 (Mus musculus (Mouse)).